The following is a 153-amino-acid chain: Endoribonuclease YbeY (153 aa).

Histidine 118, histidine 122, and histidine 128 together coordinate Zn(2+).

This sequence belongs to the endoribonuclease YbeY family. Zn(2+) serves as cofactor.

The protein resides in the cytoplasm. Its function is as follows. Single strand-specific metallo-endoribonuclease involved in late-stage 70S ribosome quality control and in maturation of the 3' terminus of the 16S rRNA. In Chloroflexus aggregans (strain MD-66 / DSM 9485), this protein is Endoribonuclease YbeY.